Here is a 1128-residue protein sequence, read N- to C-terminus: MEPNDSTSTTMEEPESLEVLVKTLDSQTRTFIVGAQMNVKEFKEHIAASVSIPSEKQRLIYQGRVLQDDKKLQEYNVGGKVIHLVERAPPQTQLPSGASSGTGSASATHGGGPPPGTRGPGASVHDRNANSYVMVGTFNLPSDGSAVDVHINMEQAPIQSEPRVRLVMAQHMIRDIQTLLSRMECRGGSQAQHSQPPSQMPTVAPEPVALSSQTSESVESEVPPREPMAAEEVEERASAQSPGLSPSGPAPAGPTPAPETNAPNHPSPAEYVEVLQELQRLESRLQPFLQRYYEVLGAAATTDYNNNQEGREEDQRLINLVGESLRLLGNTFVALSDLRCNLACAPPRHLHVVRPMSHYTTPMVLQQAAIPIQINVGTTVTMTGNGTRPPPTPNAEAPPPGPGQASSLAPSSTTVESSTEGAPPPGPAPPPAASHPRVIRISHQSVEPVVMMHMNIQDSGTQPGGVPSAPTGPLGPTGHGQTLGQQVPGFPTAPTRVVIARPTPPQSRPSHPGGPPVSGALPGAGLGTNASLAQMVSGLVGQLLMQPVLVAQGTPGMAPPPAPATASASAGTTNTATTAGPAPGGPAQPPPPQPSASDLQFSQLLGNLLGPAGPGAGGPGMTSPTITVAMPGVPAFLQGMTDFLQATQTAAPPAPPPPPPPPPPAPEQQTAPPPGSPPGGAGSPGGLGPESLPLEFFTSVVQGVLSSLLGSLGARAGSSESIAAFIQRLSGSSNIFEPGADGALGFFGALLSLLCQNFSMVDVVMLLHGHFQPLQRLQPQLRSFFHQHYLGGQEPTPGNIRTATHTLITGLEEYVRESFSLVQVQPGVDIIRTNLEFLQEQFNSIAAHVMHCTDSGFGARLLELCNQGLFECLALNLHCLGGQQMELAAVINGRIRRMSRGVNPSLVSWLTTMMGLRLQVVLEHMPVGPDAILRYVRRVGDPPQPLPEEPMEVQGSERTSPEPQRENASPAPGTTAEEAMSRGPPPAPEGGSRDEQDGAAAETEPWAAAVPPEWVPIIQQDIQSQRKVKPQPPLSDAYLSGMPAKRRKTMQGEGPQLLLSEAVSRAAKAAGARPLTSPESLSRDLEAPEVQESYRQQLRADIQKRLQEDPNYSPQRFPNAHRAFAEDP.

Met-1 is modified (N-acetylmethionine). The Ubiquitin-like domain occupies Leu-17–Thr-92. Disordered regions lie at residues Arg-87–Asp-126, Cys-185–Ser-267, Val-380–His-435, Ile-456–Gly-523, and Pro-555–Asp-598. Positions Pro-95–Thr-108 are enriched in low complexity. Ser-96 bears the Phosphoserine mark. Residue Thr-117 is modified to Phosphothreonine. Positions Ser-189–Pro-201 are enriched in polar residues. The stretch at Arg-236–His-265 is repeat 1. The 4 X 29 AA approximate repeats stretch occupies residues Arg-236–Met-630. Positions Ser-238–Ser-247 are enriched in low complexity. Pro residues-rich tracts occupy residues Gly-248 to Ala-257 and Arg-388 to Pro-402. The segment covering Gly-403–Ser-412 has biased composition (low complexity). Residues Pro-410–Val-438 form repeat 2. 2 stretches are compositionally biased toward pro residues: residues Ala-422–Ala-433 and Pro-502–Pro-515. The segment covering Ala-564 to Pro-581 has biased composition (low complexity). Repeat copies occupy residues Ser-569–Ala-596 and Ser-602–Met-630. The span at Pro-583 to Pro-594 shows a compositional bias: pro residues. Disordered regions lie at residues Gln-648–Pro-689 and Val-939–Pro-1128. The segment covering Pro-652 to Pro-677 has biased composition (pro residues). Residues Pro-678–Gly-688 show a composition bias toward gly residues. Phosphoserine occurs at positions 960 and 969. Residues Ala-999–Pro-1016 are compositionally biased toward low complexity. The interval Trp-1006–Asp-1036 is required for interaction with GET4. The short motif at Ala-1008 to Met-1050 is the Nuclear localization site element. Residues Ile-1018 to Pro-1128 are sufficient for the delivery of client proteins to the endoplasmic reticulum. Thr-1049 carries the post-translational modification Phosphothreonine. Residues Gly-1054 to Asn-1111 form a BAG-similar domain, required and sufficient for interaction with UBL4A region. Residues Ala-1062–Ala-1072 are compositionally biased toward low complexity. Residues Ser-1077 and Ser-1113 each carry the phosphoserine modification.

As to quaternary structure, component of the BAG6/BAT3 complex, also named BAT3 complex, at least composed of BAG6, UBL4A and GET4/TRC35. Interacts with GET4; the interaction is direct and localizes BAG6 in the cytosol. Interacts with UBL4A; the interaction is direct and required for UBL4A protein stability. Interacts with AIFM1. Interacts with HSPA2. Interacts with CTCFL. Interacts with p300/EP300. Interacts (via ubiquitin-like domain) with RNF126; required for BAG6-dependent ubiquitination of proteins mislocalized to the cytosol. Interacts (via ubiquitin-like domain) with SGTA; SGTA competes with RNF126 by binding the same region of BAG6, thereby promoting deubiquitination of BAG6-target proteins and rescuing them from degradation. Interacts with ricin A chain. Interacts with VCP and AMFR; both form the VCP/p97-AMFR/gp78 complex. Interacts with SYVN1. Interacts with USP13; the interaction is direct and may mediate UBL4A deubiquitination. Interacts with ZFAND2B. Interacts with KPNA2. Interacts with UBQLN4. Post-translationally, ricin can induce a cleavage by the caspase CASP3. The released C-terminal peptide induces apoptosis.

It localises to the cytoplasm. Its subcellular location is the cytosol. The protein resides in the nucleus. It is found in the secreted. The protein localises to the extracellular exosome. Its function is as follows. ATP-independent molecular chaperone preventing the aggregation of misfolded and hydrophobic patches-containing proteins. Functions as part of a cytosolic protein quality control complex, the BAG6/BAT3 complex, which maintains these client proteins in a soluble state and participates in their proper delivery to the endoplasmic reticulum or alternatively can promote their sorting to the proteasome where they undergo degradation. The BAG6/BAT3 complex is involved in the post-translational delivery of tail-anchored/type II transmembrane proteins to the endoplasmic reticulum membrane. Recruited to ribosomes, it interacts with the transmembrane region of newly synthesized tail-anchored proteins and together with SGTA and ASNA1 mediates their delivery to the endoplasmic reticulum. Client proteins that cannot be properly delivered to the endoplasmic reticulum are ubiquitinated by RNF126, an E3 ubiquitin-protein ligase associated with BAG6 and are sorted to the proteasome. SGTA which prevents the recruitment of RNF126 to BAG6 may negatively regulate the ubiquitination and the proteasomal degradation of client proteins. Similarly, the BAG6/BAT3 complex also functions as a sorting platform for proteins of the secretory pathway that are mislocalized to the cytosol either delivering them to the proteasome for degradation or to the endoplasmic reticulum. The BAG6/BAT3 complex also plays a role in the endoplasmic reticulum-associated degradation (ERAD), a quality control mechanism that eliminates unwanted proteins of the endoplasmic reticulum through their retrotranslocation to the cytosol and their targeting to the proteasome. It maintains these retrotranslocated proteins in an unfolded yet soluble state condition in the cytosol to ensure their proper delivery to the proteasome. BAG6 is also required for selective ubiquitin-mediated degradation of defective nascent chain polypeptides by the proteasome. In this context, it may participate in the production of antigenic peptides and play a role in antigen presentation in immune response. BAG6 is also involved in endoplasmic reticulum stress-induced pre-emptive quality control, a mechanism that selectively attenuates the translocation of newly synthesized proteins into the endoplasmic reticulum and reroutes them to the cytosol for proteasomal degradation. BAG6 may ensure the proper degradation of these proteins and thereby protects the endoplasmic reticulum from protein overload upon stress. By inhibiting the polyubiquitination and subsequent proteasomal degradation of HSPA2 it may also play a role in the assembly of the synaptonemal complex during spermatogenesis. Also positively regulates apoptosis by interacting with and stabilizing the proapoptotic factor AIFM1. By controlling the steady-state expression of the IGF1R receptor, indirectly regulates the insulin-like growth factor receptor signaling pathway. Functionally, involved in DNA damage-induced apoptosis: following DNA damage, accumulates in the nucleus and forms a complex with p300/EP300, enhancing p300/EP300-mediated p53/TP53 acetylation leading to increase p53/TP53 transcriptional activity. When nuclear, may also act as a component of some chromatin regulator complex that regulates histone 3 'Lys-4' dimethylation (H3K4me2). In terms of biological role, released extracellularly via exosomes, it is a ligand of the natural killer/NK cells receptor NCR3 and stimulates NK cells cytotoxicity. It may thereby trigger NK cells cytotoxicity against neighboring tumor cells and immature myeloid dendritic cells (DC). May mediate ricin-induced apoptosis. The chain is Large proline-rich protein BAG6 from Sus scrofa (Pig).